Consider the following 489-residue polypeptide: Ataxin-10 homolog (489 aa).

Belongs to the ataxin-10 family.

The protein resides in the cytoplasm. May play a role in the regulation of cytokinesis. This is Ataxin-10 homolog (CTR86) from Debaryomyces hansenii (strain ATCC 36239 / CBS 767 / BCRC 21394 / JCM 1990 / NBRC 0083 / IGC 2968) (Yeast).